The chain runs to 461 residues: Glutamate--tRNA ligase (461 aa).

Positions 8–18 (PSPTGYLHIGG) match the 'HIGH' region motif. Positions 240 to 244 (KMSKR) match the 'KMSKS' region motif. Lys-243 lines the ATP pocket.

This sequence belongs to the class-I aminoacyl-tRNA synthetase family. Glutamate--tRNA ligase type 1 subfamily. In terms of assembly, monomer.

It is found in the cytoplasm. The catalysed reaction is tRNA(Glu) + L-glutamate + ATP = L-glutamyl-tRNA(Glu) + AMP + diphosphate. Catalyzes the attachment of glutamate to tRNA(Glu) in a two-step reaction: glutamate is first activated by ATP to form Glu-AMP and then transferred to the acceptor end of tRNA(Glu). This Chromobacterium violaceum (strain ATCC 12472 / DSM 30191 / JCM 1249 / CCUG 213 / NBRC 12614 / NCIMB 9131 / NCTC 9757 / MK) protein is Glutamate--tRNA ligase.